A 94-amino-acid polypeptide reads, in one-letter code: Co-chaperonin GroES (94 aa).

It belongs to the GroES chaperonin family. As to quaternary structure, heptamer of 7 subunits arranged in a ring. Interacts with the chaperonin GroEL.

The protein resides in the cytoplasm. Its function is as follows. Together with the chaperonin GroEL, plays an essential role in assisting protein folding. The GroEL-GroES system forms a nano-cage that allows encapsulation of the non-native substrate proteins and provides a physical environment optimized to promote and accelerate protein folding. GroES binds to the apical surface of the GroEL ring, thereby capping the opening of the GroEL channel. The protein is Co-chaperonin GroES of Lactococcus lactis subsp. lactis (strain IL1403) (Streptococcus lactis).